Here is a 67-residue protein sequence, read N- to C-terminus: Bowman-Birk type proteinase inhibitor A4 (67 aa).

4 disulfide bridges follow: Cys10–Cys29, Cys16–Cys27, Cys36–Cys43, and Cys40–Cys57.

The protein belongs to the Bowman-Birk serine protease inhibitor family. In terms of tissue distribution, expressed in bulb (at protein level).

Functionally, serine protease inhibitor. Inhibits trypsin (Ki=12nM) and weakly inhibits chymotrypsin with (Ki=460nm). Does not inhibit bacterial subtilisin. The protein is Bowman-Birk type proteinase inhibitor A4 of Hyacinthus orientalis (Common hyacinth).